Consider the following 395-residue polypeptide: L-methionine gamma-lyase (395 aa).

Residues 56 to 58 and 86 to 87 each bind pyridoxal 5'-phosphate; these read YTR and GM. Tyr111 serves as a coordination point for substrate. Residue 206 to 208 participates in pyridoxal 5'-phosphate binding; sequence SVT. At Lys209 the chain carries N6-(pyridoxal phosphate)lysine. Residue Arg373 participates in substrate binding.

The protein belongs to the trans-sulfuration enzymes family. L-methionine gamma-lyase subfamily. Homotetramer. Pyridoxal 5'-phosphate serves as cofactor.

The catalysed reaction is L-methionine + H2O = methanethiol + 2-oxobutanoate + NH4(+). It catalyses the reaction L-homocysteine + H2O = 2-oxobutanoate + hydrogen sulfide + NH4(+) + H(+). Its function is as follows. Catalyzes the alpha,gamma-elimination of L-methionine to produce methanethiol, 2-oxobutanoate and ammonia; methanethiol (methyl mercaptan) is considered to be one of the main causes of the oral malodor associated with periodontitis. Also displays homocysteine desulfhydrase activity, degrading homocysteine to produce hydrogen sulfide, 2-oxobutanoate and ammonia. L-cysteine and S-methyl-L-cysteine are poor substrates for the enzyme. Functionally, plays an important role in the resistance of F.nucleatum to the antibacterial agent 3-chloro-DL-alanine (3CA), thanks to its 3CA chloride-lyase (deaminating) activity. This is L-methionine gamma-lyase from Fusobacterium nucleatum subsp. polymorphum (Fusobacterium polymorphum).